The primary structure comprises 20 residues: Agglutinin beta-3 chain (20 aa).

The tract at residues 1 to 20 (GPNGKSQSIIVGPWGDRVTN) is disordered.

The protein belongs to the jacalin lectin family. In terms of assembly, formed of four alpha chains and four beta chains.

Its function is as follows. D-galactose-specific lectin, binds the T-antigen structure Gal-beta1,3-GalNAc. The protein is Agglutinin beta-3 chain of Maclura pomifera (Osage orange).